A 344-amino-acid polypeptide reads, in one-letter code: RNA 3'-terminal phosphate cyclase (344 aa).

Residues Gln102 and 284–288 each bind ATP; that span reads FLGDQ. The Tele-AMP-histidine intermediate role is filled by His308.

This sequence belongs to the RNA 3'-terminal cyclase family. Type 1 subfamily.

The protein resides in the cytoplasm. It carries out the reaction a 3'-end 3'-phospho-ribonucleotide-RNA + ATP = a 3'-end 2',3'-cyclophospho-ribonucleotide-RNA + AMP + diphosphate. Catalyzes the conversion of 3'-phosphate to a 2',3'-cyclic phosphodiester at the end of RNA. The mechanism of action of the enzyme occurs in 3 steps: (A) adenylation of the enzyme by ATP; (B) transfer of adenylate to an RNA-N3'P to produce RNA-N3'PP5'A; (C) and attack of the adjacent 2'-hydroxyl on the 3'-phosphorus in the diester linkage to produce the cyclic end product. The biological role of this enzyme is unknown but it is likely to function in some aspects of cellular RNA processing. This Thermococcus gammatolerans (strain DSM 15229 / JCM 11827 / EJ3) protein is RNA 3'-terminal phosphate cyclase.